Consider the following 654-residue polypeptide: MAAAALGSSSGSASPAVAELCQNTPETFLEASKLLLTYADNILRNPNDEKYRSIRIGNTAFSTRLLPVRGAVECLFEMGFEEGETHLIFPKKASVEQLQKIRDLIAIERSSRLDGSNKSHKVKSSQQPAASTQLPTTPSSNPSGLNQHTRNRQGQSSDPPSASTVAADSAILEVLQSNIQHVLVYENPALQEKALACIPVQELKRKSQEKLSRARKLDKGINISDEDFLLLELLHWFKEEFFHWVNNVLCSKCGGQTRSRDRSLLPSDDELKWGAKEVEDHYCDACQFSNRFPRYNNPEKLLETRCGRCGEWANCFTLCCRAVGFEARYVWDYTDHVWTEVYSPSQQRWLHCDACEDVCDKPLLYEIGWGKKLSYVIAFSKDEVVDVTWRYSCKHEEVIARRTKVKEALLRDTINGLNKQRQLFLSENRRKELLQRIIVELVEFISPKTPKPGELGGRISGSVAWRVARGEMGLQRKETLFIPCENEKISKQLHLCYNIVKDRYVRVSNNNQTISGWENGVWKMESIFRKVETDWHMVYLARKEGSSFAYISWKFECGSVGLKVDSISIRTSSQTFQTGTVEWKLRSDTAQVELTGDNSLHSYADFSGATEVILEAELSRGDGDVAWQHTQLFRQSLNDHEENCLEIIIKFSDL.

Alanine 2 bears the N-acetylalanine mark. The 62-residue stretch at 30 to 91 (EASKLLLTYA…EGETHLIFPK (62 aa)) folds into the PUB domain. A disordered region spans residues 112–163 (RLDGSNKSHKVKSSQQPAASTQLPTTPSSNPSGLNQHTRNRQGQSSDPPSAS). The span at 124 to 163 (SSQQPAASTQLPTTPSSNPSGLNQHTRNRQGQSSDPPSAS) shows a compositional bias: polar residues. Threonine 137 bears the Phosphothreonine mark. 4 residues coordinate Zn(2+): cysteine 250, cysteine 253, cysteine 283, and cysteine 286. Cysteine 309 acts as the Nucleophile in catalysis. Active-site residues include histidine 336 and aspartate 353. The region spanning 454-654 (ELGGRISGSV…LEIIIKFSDL (201 aa)) is the PAW domain.

It belongs to the transglutaminase-like superfamily. PNGase family. As to quaternary structure, component of a complex required to couple retrotranslocation, ubiquitination and deglycosylation composed of NGLY1, SAKS1, AMFR, VCP and RAD23B. Interacts with the proteasome components RAD23B and PSMC1. Interacts with directly with VCP. Interacts with DERL1, bringing it close to the endoplasmic reticulum membrane. Interacts with SAKS1. Zn(2+) serves as cofactor.

The protein localises to the cytoplasm. The catalysed reaction is Hydrolysis of an N(4)-(acetyl-beta-D-glucosaminyl)asparagine residue in which the glucosamine residue may be further glycosylated, to yield a (substituted) N-acetyl-beta-D-glucosaminylamine and a peptide containing an aspartate residue.. Inhibited by Z-VAD-fmk, a well-known caspase inhibitor, which inhibits enzyme activity through covalent binding of the carbohydrate to the single Cys-306 residue. In terms of biological role, specifically deglycosylates the denatured form of N-linked glycoproteins in the cytoplasm and assists their proteasome-mediated degradation. Cleaves the beta-aspartyl-glucosamine (GlcNAc) of the glycan and the amide side chain of Asn, converting Asn to Asp. Prefers proteins containing high-mannose over those bearing complex type oligosaccharides. Can recognize misfolded proteins in the endoplasmic reticulum that are exported to the cytosol to be destroyed and deglycosylate them, while it has no activity toward native proteins. Deglycosylation is a prerequisite for subsequent proteasome-mediated degradation of some, but not all, misfolded glycoproteins. The protein is Peptide-N(4)-(N-acetyl-beta-glucosaminyl)asparagine amidase (NGLY1) of Homo sapiens (Human).